The sequence spans 497 residues: Putative zinc finger and SCAN domain-containing protein 5D (497 aa).

Residues 41–123 (KAGRRMFSCP…DLLRNNRRPK (83 aa)) form the SCAN box domain. The interval 148–342 (PASVRDDPRG…GPAGAVSHPN (195 aa)) is disordered. Polar residues predominate over residues 158-167 (VSSQRASSVN). Basic and acidic residues-rich tracts occupy residues 216-229 (PTLEKDLNVDREEN) and 249-259 (KEGKEPKKRAS). 5 C2H2-type zinc fingers span residues 352–374 (FACGVCNKRFTCNSKLAIHMRSH), 380–402 (FQCNFCERCFTQLSDLRVHQRIH), 408–430 (YTCDICHKRFNRMFSLKCHKRSH), 436–458 (YKCKDCNQVFTYRKNLNEHKLIH), and 464–486 (YKCPKCLRAFRRPETLKYHQKTH).

It is found in the nucleus. This Homo sapiens (Human) protein is Putative zinc finger and SCAN domain-containing protein 5D.